The sequence spans 370 residues: MSAAARVVAPVMMLSRFRGALVGSVLGDCIGGEFEGAVDVPLDRVLQHLSALEDDTRGDGILQYSDDTAMMRCVADSLLTRMTFDERDMAQRFAKEYSHSPGRGYGSGVVQVLRKLASPHLKDVFQPAQAQFGGRGSFGNGGAMRAVPFALAFRSRADVRKYSRFGAMLTHSCSLGYNGAALQALAVHLSLQGALALPKDFIDKLISEMEELEKDETAKHDAKALNLSEFPYCSRLHRVKELMDKTSVSIEEVISELGNGIAALQSVPTAIFCVLYCLEPQDGLPERFGGLERTIAYSLALGGDTDTIACMAGAIAGAHYGIDSIPLSWQVSCEGVDEADDLARRLYDLYCLPQHNEDRGNNQPHTTNTD.

Mg(2+)-binding residues include Glu35, Asp66, and Asp67. Asp66 is a binding site for substrate. Substrate-binding positions include 135–141 (RGSFGNG), His171, Leu225, and Ile261. 3 residues coordinate Mg(2+): Asp304, Asp306, and Thr307.

It belongs to the ADP-ribosylglycohydrolase family. Monomer. Requires Mg(2+) as cofactor.

The protein localises to the nucleus. Its subcellular location is the cytoplasm. The protein resides in the chromosome. It is found in the mitochondrion matrix. It catalyses the reaction [(1''-&gt;2')-ADP-alpha-D-ribose](n) + H2O = [(1''-&gt;2')-ADP-alpha-D-ribose](n-1) + ADP-D-ribose. The enzyme catalyses 1''-O-acetyl-ADP-alpha-D-ribose + H2O = ADP-D-ribose + acetate + H(+). The catalysed reaction is O-(ADP-D-ribosyl)-L-seryl-[protein] + H2O = ADP-D-ribose + L-seryl-[protein]. It carries out the reaction alpha-NAD(+) + H2O = ADP-D-ribose + nicotinamide + H(+). The protein undergoes a dramatic conformational switch from closed to open states upon substrate-binding, which enables specific substrate recognition for the 1''-O-linkage. The glutamate flap (Glu-35) blocks substrate entrance to Mg(2+) in the unliganded closed state. In presence of substrate, Glu-35 is ejected from the active site: this closed-to-open transition significantly widens the substrate-binding channel and precisely positions the scissile 1''-O-linkage for cleavage while securing tightly 2'- and 3'-hydroxyls of ADP-ribose. Its function is as follows. ADP-ribosylhydrolase that preferentially hydrolyzes the scissile alpha-O-linkage attached to the anomeric C1'' position of ADP-ribose and acts on different substrates, such as proteins ADP-ribosylated on serine and threonine, free poly(ADP-ribose) and O-acetyl-ADP-D-ribose. Specifically acts as a serine mono-ADP-ribosylhydrolase by mediating the removal of mono-ADP-ribose attached to serine residues on proteins, thereby playing a key role in DNA damage response. Serine ADP-ribosylation of proteins constitutes the primary form of ADP-ribosylation of proteins in response to DNA damage. Does not hydrolyze ADP-ribosyl-arginine, -cysteine, -diphthamide, or -asparagine bonds. Also able to degrade protein free poly(ADP-ribose), which is synthesized in response to DNA damage: free poly(ADP-ribose) acts as a potent cell death signal and its degradation by ADPRHL2 protects cells from poly(ADP-ribose)-dependent cell death, a process named parthanatos. Also hydrolyzes free poly(ADP-ribose) in mitochondria. Specifically digests O-acetyl-ADP-D-ribose, a product of deacetylation reactions catalyzed by sirtuins. Specifically degrades 1''-O-acetyl-ADP-D-ribose isomer, rather than 2''-O-acetyl-ADP-D-ribose or 3''-O-acetyl-ADP-D-ribose isomers. The chain is ADP-ribosylhydrolase ARH3 (adprs) from Danio rerio (Zebrafish).